The sequence spans 101 residues: Apolipoprotein C-II (101 aa).

An N-terminal signal peptide occupies residues 1-22 (MGTRCLLVLLLVLLVLKCEVQG). Residues 23-28 (DDMARQ) constitute a propeptide, removed in mature form. Residues 66-74 (AMDEKIRDM) form a lipid binding region. The lipoprotein lipase cofactor stretch occupies residues 78-101 (STAAVRIYTGILTDQILSMLTGDP).

The protein belongs to the apolipoprotein C2 family. In terms of processing, proapolipoprotein C-II is synthesized as a sialic acid containing glycoprotein which is subsequently desialylated prior to its proteolytic processing. Post-translationally, proapolipoprotein C-II, the major form found in plasma undergoes proteolytic cleavage of its N-terminal hexapeptide to generate the mature form apolipoprotein C-II, which occurs as the minor form in plasma.

The protein resides in the secreted. Component of chylomicrons, very low-density lipoproteins (VLDL), low-density lipoproteins (LDL), and high-density lipoproteins (HDL) in plasma. Plays an important role in lipoprotein metabolism as an activator of lipoprotein lipase, the enzyme which hydrolyzes the triacylglycerols on chylomicrons and VLDL. This chain is Apolipoprotein C-II (APOC2), found in Panthera tigris altaica (Siberian tiger).